The sequence spans 88 residues: Small ribosomal subunit protein bS16 (88 aa).

The protein belongs to the bacterial ribosomal protein bS16 family.

In Geobacter sp. (strain M21), this protein is Small ribosomal subunit protein bS16.